Consider the following 314-residue polypeptide: Olfactory receptor 5F1 (314 aa).

At 1 to 25 the chain is on the extracellular side; it reads MTRKNYTSLTEFVLLGLADTLELQI. A glycan (N-linked (GlcNAc...) asparagine) is linked at N5. The chain crosses the membrane as a helical span at residues 26–46; the sequence is ILFLFFLVIYTLTVLGNLGMI. The Cytoplasmic portion of the chain corresponds to 47-54; sequence LLIRIDSQ. The helical transmembrane segment at 55–75 threads the bilayer; the sequence is LHTPMYFFLANLSFVDVCNST. The Extracellular segment spans residues 76–99; that stretch reads TITPKMLADLLSEKKTISFAGCFL. Residues C97 and C189 are joined by a disulfide bond. The helical transmembrane segment at 100-120 threads the bilayer; the sequence is QMYFFISLATTECILFGLMAY. Over 121 to 139 the chain is Cytoplasmic; that stretch reads DRYAAICRPLLYSLIMSRT. Residues 140-160 form a helical membrane-spanning segment; that stretch reads VYLKMAAGAFAAGLLNFMVNT. At 161 to 196 the chain is on the extracellular side; it reads SHVSSLSFCDSNVIHHFFCDSPPLFKLSCSDTILKE. The chain crosses the membrane as a helical span at residues 197–217; that stretch reads SISSILAGVNIVGTLLVILSS. The Cytoplasmic segment spans residues 218–237; that stretch reads YSYVLFSIFSMHSGEGRHRA. The helical transmembrane segment at 238-258 threads the bilayer; sequence FSTCASHLTAIILFYATCIYT. The Extracellular segment spans residues 259–271; the sequence is YLRPSSSYSLNQD. Residues 272–292 form a helical membrane-spanning segment; it reads KVASVFYTVVIPMLNPLIYSL. At 293 to 314 the chain is on the cytoplasmic side; sequence RSKEVKKALANVISRKRTSSFL.

It belongs to the G-protein coupled receptor 1 family.

It localises to the cell membrane. Its function is as follows. Odorant receptor. This Homo sapiens (Human) protein is Olfactory receptor 5F1 (OR5F1).